We begin with the raw amino-acid sequence, 260 residues long: Cobalt transport protein CbiM (260 aa).

The first 34 residues, 1–34 (MKLGESMKKNATLSVKIIAFLGVLIFTVMPVANA), serve as a signal peptide directing secretion. The next 6 helical transmembrane spans lie at 39 to 59 (EGYLSPKWCIIWGILVLPFLI), 77 to 97 (LLFAMAGAFIFILSALKLPSF), 109 to 129 (LSTILFGPAITTVLGVIVLLF), 132 to 152 (LLLAHGGISTLGANSFAMAVM), 175 to 195 (IFFSATVGDLFTYCITAIQLG), and 215 to 235 (VFAITQIPIAIAEGILTVLIF).

This sequence belongs to the CbiM family. As to quaternary structure, forms an energy-coupling factor (ECF) transporter complex composed of an ATP-binding protein (A component, CbiO), a transmembrane protein (T component, CbiQ) and 2 possible substrate-capture proteins (S components, CbiM and CbiN) of unknown stoichimetry.

Its subcellular location is the cell membrane. It participates in cofactor biosynthesis; adenosylcobalamin biosynthesis. Functionally, part of the energy-coupling factor (ECF) transporter complex CbiMNOQ involved in cobalt import. This Clostridium cellulovorans (strain ATCC 35296 / DSM 3052 / OCM 3 / 743B) protein is Cobalt transport protein CbiM.